The following is a 488-amino-acid chain: Katanin p60 ATPase-containing subunit A-like 1 (488 aa).

M1 carries the N-acetylmethionine modification. A disordered region spans residues 95-179 (DPAVWPPPVP…GASDSEIPKF (85 aa)). The segment covering 116–127 (PNREVRPLRKDV) has biased composition (basic and acidic residues). The segment covering 128-138 (GAGARGLVGRA) has biased composition (low complexity). Basic and acidic residues predominate over residues 142–167 (SKSDKPASRDKDYRARGRDDKARKNV). S172 is modified (phosphoserine). 246-253 (GPPGTGKT) serves as a coordination point for ATP.

Belongs to the AAA ATPase family. Katanin p60 subunit A1 subfamily. A-like 1 sub-subfamily. In terms of assembly, interacts with KATNB1 and KATNBL1. In terms of tissue distribution, widely expressed, including in testis, brain, heart, lung, kidney, liver, spleen, seminal vesicles and ovary. In testis, restricted to Sertoli cells within the seminiferous epithelium (at protein level).

It is found in the cytoplasm. It localises to the cytoskeleton. The protein resides in the spindle pole. Its subcellular location is the spindle. The enzyme catalyses n ATP + n H2O + a microtubule = n ADP + n phosphate + (n+1) alpha/beta tubulin heterodimers.. Its function is as follows. Regulates microtubule dynamics in Sertoli cells, a process that is essential for spermiogenesis and male fertility. Severs microtubules in an ATP-dependent manner, promoting rapid reorganization of cellular microtubule arrays. Has microtubule-severing activity in vitro. In Mus musculus (Mouse), this protein is Katanin p60 ATPase-containing subunit A-like 1 (Katnal1).